Consider the following 198-residue polypeptide: Lipoprotein signal peptidase (198 aa).

Positions 1–34 (MDDERVSQDPTAENETDAEDRNDDDPSGSAPPQP) are disordered. Over residues 12–26 (AENETDAEDRNDDDP) the composition is skewed to acidic residues. The next 3 helical transmembrane spans lie at 42–62 (LLFV…ILAV), 92–112 (MATG…IGVV), and 120–140 (SPWW…NLVD). Residues D155 and D169 contribute to the active site. A helical transmembrane segment spans residues 167–187 (VADSGIVCGAILLVVLTLIGL).

It belongs to the peptidase A8 family.

It is found in the cell membrane. The catalysed reaction is Release of signal peptides from bacterial membrane prolipoproteins. Hydrolyzes -Xaa-Yaa-Zaa-|-(S,diacylglyceryl)Cys-, in which Xaa is hydrophobic (preferably Leu), and Yaa (Ala or Ser) and Zaa (Gly or Ala) have small, neutral side chains.. Its pathway is protein modification; lipoprotein biosynthesis (signal peptide cleavage). Its function is as follows. This protein specifically catalyzes the removal of signal peptides from prolipoproteins. This is Lipoprotein signal peptidase from Rhodococcus jostii (strain RHA1).